We begin with the raw amino-acid sequence, 422 residues long: MGVDLRQVVAGILTITMFVMLGQMLHRDYFDSLQEKAQGDAQDIEFEGSKVSVKDGLVGTVEGSKGLWMEDNTDLTPCWPTLLSDDAVSSKGYVTFSLTNGPEYHISQITDAVMVAKHLGATLVLPDIRGSKPGDERNFEDIYDADKLIKSLENVVKVVKKLPEEVSLRNMAIVKVPTRVTEDYIKEHIDPIFKSKGNIRVASYFPSVNLRKSSQDGETDPVACLAMFGSLELQPEVNAVAESMVERLRTHSRKSGGRFIAVDLRIDILEKKNCHTTGVVGSKTCYNAQEIALFLRKLGFASDTTIYLTQPRWDSSLNILKDIFPKTFTKEAIMPASKRSKYLESVSSEYENVIDFYISSRSDVFVPAISGLFYANTVGKRIALGKPQVLVPAEISETSGLATDFISPYISKKNHLAYSCFC.

At 1-6 the chain is on the cytoplasmic side; sequence MGVDLR. Residues 7–26 traverse the membrane as a helical; Signal-anchor for type II membrane protein segment; it reads QVVAGILTITMFVMLGQMLH. The Lumenal portion of the chain corresponds to 27–422; sequence RDYFDSLQEK…KNHLAYSCFC (396 aa). Position 263–265 (263–265) interacts with substrate; sequence DLR.

It belongs to the glycosyltransferase GT106 family. In terms of tissue distribution, widely expressed.

The protein localises to the golgi apparatus membrane. It participates in glycan biosynthesis. Glycosyltransferase involved in mannan biosynthesis. This Arabidopsis thaliana (Mouse-ear cress) protein is Protein MANNAN SYNTHESIS-RELATED 1.